Reading from the N-terminus, the 625-residue chain is Protein SUPPRESSOR OF GENE SILENCING 3 (625 aa).

Disordered regions lie at residues 1-20 (MSSR…GYRP), 30-148 (AGTR…SAQH), and 161-195 (VDNA…QKSH). Polar residues predominate over residues 54-70 (KPGNTSGKTWVSQNSNP). Over residues 80–94 (GRGSNVSGRGNNVSG) the composition is skewed to low complexity. The segment covering 161-188 (VDNASEEENDSDALDDSDDDLASDDYDS) has biased composition (acidic residues). 2 coiled-coil regions span residues 452–533 (KNKL…QQQE) and 564–615 (IEFQ…EQLM).

The protein belongs to the SGS3 family. As to quaternary structure, interacts with begomoviruses protein V2. Interacts with SGIP1 in cytoplasmic granules.

It is found in the cytoplasm. The protein resides in the perinuclear region. Its subcellular location is the cytoplasmic granule. Its function is as follows. Required for post-transcriptional gene silencing and natural virus resistance. May bind nucleic acids and is essential for the biogenesis of trans-acting siRNAs but is not required for silencing induced by IR-PTGS. Involved in the juvenile-to-adult transition regulation. In case of begomoviruses infection, it is targeted by the viral protein V2 leading to suppression of post-transcriptional gene silencing. Involved in the mechanisms necessary for quick response to heat and subsequent heritable transgenerational memory of heat acclimation (global warming) such as early flowering and attenuated immunity; this process includes epigenetic regulation as well as post-transcriptional gene silencing (PTGS). In response to heat, HSFA2 is activated and promotes the expression of REF6 which in turn derepresses HSFA2, thus establishing an inheritable feedback loop able to trigger SGIP1 and subsequent SGIP1-mediated SGS3 degradation; this prevents the biosynthesis of trans-acting siRNA (tasiRNA) and leads to the release of HTT5, which drives early flowering but attenuates immunity. In Arabidopsis thaliana (Mouse-ear cress), this protein is Protein SUPPRESSOR OF GENE SILENCING 3.